The chain runs to 380 residues: S-adenosylmethionine synthase (380 aa).

Position 15 (His15) interacts with ATP. Position 17 (Asp17) interacts with Mg(2+). Position 43 (Glu43) interacts with K(+). Glu56 and Gln99 together coordinate L-methionine. The flexible loop stretch occupies residues 99 to 109 (QSPDIAMGIDN). Residues 164-166 (DAK), 230-231 (RF), Asp239, 245-246 (RK), and Lys266 each bind ATP. Asp239 is a binding site for L-methionine. An L-methionine-binding site is contributed by Lys270.

It belongs to the AdoMet synthase family. Homotetramer; dimer of dimers. Requires Mg(2+) as cofactor. K(+) is required as a cofactor.

The protein localises to the cytoplasm. The catalysed reaction is L-methionine + ATP + H2O = S-adenosyl-L-methionine + phosphate + diphosphate. Its pathway is amino-acid biosynthesis; S-adenosyl-L-methionine biosynthesis; S-adenosyl-L-methionine from L-methionine: step 1/1. Catalyzes the formation of S-adenosylmethionine (AdoMet) from methionine and ATP. The overall synthetic reaction is composed of two sequential steps, AdoMet formation and the subsequent tripolyphosphate hydrolysis which occurs prior to release of AdoMet from the enzyme. The protein is S-adenosylmethionine synthase of Rickettsia prowazekii (strain Madrid E).